We begin with the raw amino-acid sequence, 678 residues long: ATP-dependent RNA helicase DHX58 (678 aa).

The Helicase ATP-binding domain occupies 11–188; that stretch reads ILPALEGKNI…QGAIDHILQL (178 aa). 24–31 contributes to the ATP binding site; the sequence is LPTGAGKT. The DECH box motif lies at 131 to 134; sequence DECH. The 162-residue stretch at 353-514 folds into the Helicase C-terminal domain; that stretch reads MLERILLKQF…KAVAAVQKMD (162 aa). A coiled-coil region spans residues 489 to 546; the sequence is EMKRELTNEALEVLMEKAVAAVQKMDPDEFKAKIRDLQQASLVKRAARAAHREIQQGQ. Residues 542 to 669 form the RLR CTR domain; it reads IQQGQFLPEH…PVFDILQDCT (128 aa). The Zn(2+) site is built by C556, C559, C612, and C615. The segment at 572 to 655 is RNA-binding; the sequence is VEGTHHVNVN…KIQAKKWSRV (84 aa).

The protein belongs to the helicase family. RLR subfamily. In terms of assembly, monomer in the absence of dsRNA. Homodimer in the presence of dsRNA. Interacts with RIGI (via CARD domain), MAVS/IPS1 and DDX60. Found in a complex with RIGI and IFIH1/MDA5. Interacts with ANKRD17. Directly interacts with ATG5 and ATG12, either as ATG5 and ATG12 monomers or as ATG12-ATG5 conjugates. In terms of tissue distribution, highly expressed in mammary tissues. Expressed in liver and testis. Expressed at lower level in spleen, embryo, mammary gland and breast tumors.

The protein resides in the cytoplasm. The catalysed reaction is ATP + H2O = ADP + phosphate + H(+). Its function is as follows. Acts as a regulator of RIGI and IFIH1/MDA5 mediated antiviral signaling. Cannot initiate antiviral signaling as it lacks the CARD domain required for activating MAVS/IPS1-dependent signaling events. Can have both negative and positive regulatory functions related to RIGI and IFIH1/MDA5 signaling and this role in regulating signaling may be complex and could probably depend on characteristics of the infecting virus or target cells, or both. Its inhibitory action on RIG-I signaling may involve the following mechanisms: competition with RIGI for binding to the viral RNA, binding to RIGI and inhibiting its dimerization and interaction with MAVS/IPS1, competing with IKBKE in its binding to MAVS/IPS1 thereby inhibiting activation of interferon regulatory factor 3 (IRF3). Its positive regulatory role may involve unwinding or stripping nucleoproteins of viral RNA thereby facilitating their recognition by RIGI and IFIH1/MDA5. Involved in the innate immune response to various RNA viruses and some DNA viruses such as poxviruses, and also to the bacterial pathogen Listeria monocytogenes. Can bind both ssRNA and dsRNA, with a higher affinity for dsRNA. Shows a preference to 5'-triphosphorylated RNA, although it can recognize RNA lacking a 5'-triphosphate. The polypeptide is ATP-dependent RNA helicase DHX58 (Mus musculus (Mouse)).